The following is a 179-amino-acid chain: Early E3 20.1 kDa glycoprotein (179 aa).

Residues asparagine 29, asparagine 57, asparagine 70, asparagine 75, and asparagine 123 are each glycosylated (N-linked (GlcNAc...) asparagine; by host).

The protein belongs to the adenoviridae E3_20 family.

E3 proteins seem to be dispensable for virus growth in tissue culture cells. They are potentially important for virus growth under special conditions; E3 region may help adenoviruses to evade the immune surveillance of the host. This is Early E3 20.1 kDa glycoprotein from Homo sapiens (Human).